Here is a 500-residue protein sequence, read N- to C-terminus: Pyridine nucleotide-disulfide oxidoreductase domain-containing protein 1 (500 aa).

N-acetylmethionine is present on Met-1. The disordered stretch occupies residues 211 to 235; that stretch reads TRYTTEGRKKEARSKSKADNVGSAL. The segment covering 213-228 has biased composition (basic and acidic residues); sequence YTTEGRKKEARSKSKA.

It belongs to the class-I pyridine nucleotide-disulfide oxidoreductase family. PYROXD1 subfamily. The cofactor is FAD.

It is found in the nucleus. The protein resides in the cytoplasm. Its subcellular location is the myofibril. It localises to the sarcomere. Its function is as follows. Probable FAD-dependent oxidoreductase; involved in the cellular oxidative stress response. Required for normal sarcomere structure and muscle fiber integrity. This chain is Pyridine nucleotide-disulfide oxidoreductase domain-containing protein 1 (PYROXD1), found in Homo sapiens (Human).